A 311-amino-acid chain; its full sequence is UDP-N-acetylenolpyruvoylglucosamine reductase (311 aa).

The FAD-binding PCMH-type domain occupies 34–198; that stretch reads MGGAADLFIT…LEGTFRLQKG (165 aa). Residue Arg-177 is part of the active site. The Proton donor role is filled by Ser-227. Glu-297 is a catalytic residue.

It belongs to the MurB family. It depends on FAD as a cofactor.

It is found in the cytoplasm. The enzyme catalyses UDP-N-acetyl-alpha-D-muramate + NADP(+) = UDP-N-acetyl-3-O-(1-carboxyvinyl)-alpha-D-glucosamine + NADPH + H(+). Its pathway is cell wall biogenesis; peptidoglycan biosynthesis. Functionally, cell wall formation. The polypeptide is UDP-N-acetylenolpyruvoylglucosamine reductase (Shouchella clausii (strain KSM-K16) (Alkalihalobacillus clausii)).